The chain runs to 126 residues: Sperm-specific H1/protamine-like protein type 2 (126 aa).

In terms of domain architecture, H15 spans 5–84 (KKPTTLSMIV…GATGSFRVGK (80 aa)). The tract at residues 74-126 (SGATGSFRVGKAPASPKKAKKAKSPKKKSSKKSKNKSNNAKAKKSPKKKADSN) is disordered. Over residues 90–120 (KKAKKAKSPKKKSSKKSKNKSNNAKAKKSPK) the composition is skewed to basic residues.

In terms of processing, OE2 and OE3 are produced by post-translational cleavage of a common precursor. Sperm.

It localises to the nucleus. It is found in the chromosome. Its function is as follows. Linker histones are implicated in chromatin remodeling and/or transcriptional regulation during spermiogenesis, the process of spermatid maturation into spermatozoa. Protamines substitute for histones in the chromatin of sperm during the haploid phase of spermatogenesis. They compact sperm DNA into a highly condensed, stable and inactive complex. The protein is Sperm-specific H1/protamine-like protein type 2 of Ostrea edulis (Native oyster).